A 236-amino-acid chain; its full sequence is Ubiquinone biosynthesis O-methyltransferase (236 aa).

Arg39, Gly59, Asp80, and Met124 together coordinate S-adenosyl-L-methionine.

This sequence belongs to the methyltransferase superfamily. UbiG/COQ3 family.

It catalyses the reaction a 3-demethylubiquinol + S-adenosyl-L-methionine = a ubiquinol + S-adenosyl-L-homocysteine + H(+). The catalysed reaction is a 3-(all-trans-polyprenyl)benzene-1,2-diol + S-adenosyl-L-methionine = a 2-methoxy-6-(all-trans-polyprenyl)phenol + S-adenosyl-L-homocysteine + H(+). It functions in the pathway cofactor biosynthesis; ubiquinone biosynthesis. Functionally, O-methyltransferase that catalyzes the 2 O-methylation steps in the ubiquinone biosynthetic pathway. This chain is Ubiquinone biosynthesis O-methyltransferase, found in Shewanella putrefaciens (strain CN-32 / ATCC BAA-453).